The following is a 942-amino-acid chain: Lambda-carrageenase (942 aa).

The signal sequence occupies residues 1–25; the sequence is MKIKILSAMVASSLLIGCVIPTVKA.

Monomer.

It localises to the secreted. It carries out the reaction Endohydrolysis of (1-&gt;4)-beta-linkages in the backbone of lambda-carrageenan, resulting in the tetrasaccharide alpha-D-Galp2,6S2-(1-&gt;3)-beta-D-Galp2S-(1-&gt;4)-alpha-D-Galp2,6S2-(1-&gt;3)-D-Galp2S.. Functionally, hydrolyzes lambda-carrageenan with inversion of anomeric configuration. Does not hydrolyze iota- and kappa-carrageenans, agarose or porphyran. The sequence is that of Lambda-carrageenase from Pseudoalteromonas carrageenovora (Alteromonas carrageenovora).